A 295-amino-acid polypeptide reads, in one-letter code: Release factor glutamine methyltransferase (295 aa).

S-adenosyl-L-methionine contacts are provided by residues 127–131, D150, F179, and N195; that span reads GTGSG. A substrate-binding site is contributed by 195 to 198; that stretch reads NPPY.

Belongs to the protein N5-glutamine methyltransferase family. PrmC subfamily.

The enzyme catalyses L-glutaminyl-[peptide chain release factor] + S-adenosyl-L-methionine = N(5)-methyl-L-glutaminyl-[peptide chain release factor] + S-adenosyl-L-homocysteine + H(+). Its function is as follows. Methylates the class 1 translation termination release factors RF1/PrfA and RF2/PrfB on the glutamine residue of the universally conserved GGQ motif. The sequence is that of Release factor glutamine methyltransferase from Nitratidesulfovibrio vulgaris (strain ATCC 29579 / DSM 644 / CCUG 34227 / NCIMB 8303 / VKM B-1760 / Hildenborough) (Desulfovibrio vulgaris).